The primary structure comprises 65 residues: MPKLKTSKAIAKRFKVSSSGKILRHKASKSHLLQKKSSKHRRHLSSTCQVDSRDAKNISINLPYL.

The interval 18 to 50 (SSGKILRHKASKSHLLQKKSSKHRRHLSSTCQV) is disordered. Residues 22-44 (ILRHKASKSHLLQKKSSKHRRHL) show a composition bias toward basic residues.

The protein belongs to the bacterial ribosomal protein bL35 family.

It is found in the plastid. The protein localises to the chloroplast. The chain is Large ribosomal subunit protein bL35c from Porphyra purpurea (Red seaweed).